The chain runs to 151 residues: Ribonuclease P protein component (151 aa).

Residues 1–62 are disordered; it reads MDEKDLATQP…LKGDSAFRRL (62 aa). The span at 28-48 shows a compositional bias: low complexity; sequence GAQGAEAQAAEGPLAAHAQGA.

Belongs to the RnpA family. Consists of a catalytic RNA component (M1 or rnpB) and a protein subunit.

It catalyses the reaction Endonucleolytic cleavage of RNA, removing 5'-extranucleotides from tRNA precursor.. Functionally, RNaseP catalyzes the removal of the 5'-leader sequence from pre-tRNA to produce the mature 5'-terminus. It can also cleave other RNA substrates such as 4.5S RNA. The protein component plays an auxiliary but essential role in vivo by binding to the 5'-leader sequence and broadening the substrate specificity of the ribozyme. The chain is Ribonuclease P protein component from Thermus oshimai.